Consider the following 155-residue polypeptide: SsrA-binding protein (155 aa).

This sequence belongs to the SmpB family.

It is found in the cytoplasm. Its function is as follows. Required for rescue of stalled ribosomes mediated by trans-translation. Binds to transfer-messenger RNA (tmRNA), required for stable association of tmRNA with ribosomes. tmRNA and SmpB together mimic tRNA shape, replacing the anticodon stem-loop with SmpB. tmRNA is encoded by the ssrA gene; the 2 termini fold to resemble tRNA(Ala) and it encodes a 'tag peptide', a short internal open reading frame. During trans-translation Ala-aminoacylated tmRNA acts like a tRNA, entering the A-site of stalled ribosomes, displacing the stalled mRNA. The ribosome then switches to translate the ORF on the tmRNA; the nascent peptide is terminated with the 'tag peptide' encoded by the tmRNA and targeted for degradation. The ribosome is freed to recommence translation, which seems to be the essential function of trans-translation. In Streptococcus equi subsp. zooepidemicus (strain H70), this protein is SsrA-binding protein.